Here is a 581-residue protein sequence, read N- to C-terminus: Caprolactamase subunit beta (581 aa).

Aspartate 41, histidine 99, aspartate 102, and histidine 124 together coordinate Zn(2+).

It belongs to the HyuB family. In terms of assembly, the caprolactamase is a heterotetramer composed of two alpha subunits (CapA) and two beta subunits (CapB). The cofactor is Zn(2+).

With respect to regulation, activity is dependent on the presence of ATP and bicarbonate. The requirement for bicarbonate may be related to allosteric activation through conformational effects, but it is also conceivable that carboxyphosphate is formed and acts as a mediator in caprolactam activation, forming carboxy- or phospholactim. Component of a caprolactamase involved in the degradation of caprolactam, an industrial compound mainly used in the production of Nylon 6. Catalyzes the ATP-dependent hydrolysis of the caprolactam ring to form 6-aminocaproic acid (6-ACA). The beta subunit is responsible for hydrolytic lactam ring opening. The enzyme cannot use 5-oxoproline. The chain is Caprolactamase subunit beta from Pseudomonas jessenii.